Here is a 498-residue protein sequence, read N- to C-terminus: MFNYERPKHFIQSQNPCGSRLQPPGPETSSFSSQTKQSSIIIQPRQCTEQRFSASSTLSSHITMSSSAFPASPKQHAGSNPGQRVTTTYNQSPASFLSSILPSQPDYNSSKIPSAMDSNYQQSSAGQPINAKPSQTANAKPIPRTPDHEIQGSKEALIQDLERKLKCKDTLLHNGNQRLTYEEKMARRLLGPQNAAAVFQAQDDSGAQDSQQHNSEHARLQVPTSQVRSRSTSRGDVNDQDAIQEKFYPPRFIQVPENMSIDEGRFCRMDFKVSGLPAPDVSWYLNGRTVQSDDLHKMIVSEKGLHSLIFEVVRASDAGAYACVAKNRAGEATFTVQLDVLAKEHKRAPMFIYKPQSKKVLEGDSVKLECQISAIPPPKLFWKRNNEMVQFNTDRISLYQDNTGRVTLLIKDVNKKDAGWYTVSAVNEAGVTTCNTRLDVTARPNQTLPAPKQLRVRPTFSKYLALNGKGLNVKQAFNPEGEFQRLAAQSGLYESEEL.

3 disordered regions span residues 1–46 (MFNY…QPRQ), 64–151 (MSSS…HEIQ), and 202–241 (QDDS…NDQD). At arginine 20 the chain carries Omega-N-methylarginine. The span at 29–43 (SSFSSQTKQSSIIIQ) shows a compositional bias: low complexity. The span at 77–138 (AGSNPGQRVT…INAKPSQTAN (62 aa)) shows a compositional bias: polar residues. Positions 79–150 (SNPGQRVTTT…PIPRTPDHEI (72 aa)) are necessary for interaction with ACTN1. The span at 202–212 (QDDSGAQDSQQ) shows a compositional bias: low complexity. The necessary for interaction with FLNC stretch occupies residues 215–493 (SEHARLQVPT…QRLAAQSGLY (279 aa)). The interval 215–498 (SEHARLQVPT…QSGLYESEEL (284 aa)) is necessary for interaction with ACTA1. The span at 222-235 (VPTSQVRSRSTSRG) shows a compositional bias: polar residues. 2 consecutive Ig-like C2-type domains span residues 250 to 335 (PRFI…ATFT) and 349 to 441 (PMFI…LDVT).

The protein belongs to the myotilin/palladin family. Homodimer. Interacts with ACTA1, ACTN1, FLNA, FLNB, FLNC and MYOZ2. Interacts with the C-terminal region of MYOZ1. Expressed in skeletal muscle (at protein level). Expressed in skeletal muscle, heart, bone marrow and thyroid gland.

The protein localises to the cell membrane. It is found in the sarcolemma. Its subcellular location is the cytoplasm. It localises to the cytoskeleton. The protein resides in the myofibril. The protein localises to the sarcomere. It is found in the z line. Functionally, component of a complex of multiple actin cross-linking proteins. Involved in the control of myofibril assembly and stability at the Z lines in muscle cells. This chain is Myotilin (MYOT), found in Homo sapiens (Human).